The following is a 286-amino-acid chain: MPFGPASRLGVSLFDETPPVEWVPGRSQEEAETIIRAIYRQVLGNAYVMESERLAVPESQFKRGELSVREFVRAVAKSELYRSRFFTSCARYRAIELNFRHLLGRPPLDLEEMRSHSTILDTQGFEAEIDSYIDGDEYQSTFGENIVPYIRGYKTEALQSMVQFTHTFQLVRGASSSSLKGDLSGKAPKLNALVIQSTPTAVISPASAGATFSTPPTGARTRLGVDASAGGKVYRIEVTGYRAKTFNNISKFRRSNQVFLVPYEKLSQEYQRIHQQGGVIASITPV.

Residues P2–L179 form the PBS-linker domain. Positions G231–V286 constitute a CpcD-like domain.

The protein belongs to the phycobilisome linker protein family. As to quaternary structure, the phycobilisome is a hemidiscoidal structure that is composed of two distinct substructures: a core complex and six rods radiating from the core.

It localises to the cellular thylakoid membrane. Functionally, rod linker protein, associated with phycoerythrocyanin. Linker polypeptides determine the state of aggregation and the location of the disk-shaped phycobiliprotein units within the phycobilisome and modulate their spectroscopic properties in order to mediate a directed and optimal energy transfer. In Microchaete diplosiphon (Fremyella diplosiphon), this protein is Phycobilisome 31.8 kDa linker polypeptide, phycoerythrin-associated, rod (cpeC).